Consider the following 1127-residue polypeptide: uncharacterized protein (1127 aa).

An N-terminal signal peptide occupies residues 1 to 26 (MRIHQRSAPCVPVLLFLFLPSAPLCA). The disordered stretch occupies residues 533–600 (ETESLSPPAD…ASSSPSEMAV (68 aa)). Composition is skewed to low complexity over residues 536 to 549 (SLSPPADTASTPSP) and 583 to 599 (AGASEEADASSSPSEMA). The stretch at 1076 to 1126 (SEDEKEYQRALQELQKGNKLVASAVVEQLLQKDRNKKSAKIQQLKKRIDAQ) forms a coiled coil.

This is an uncharacterized protein from Treponema pallidum (strain Nichols).